A 200-amino-acid chain; its full sequence is A-type ATP synthase subunit E (200 aa).

This sequence belongs to the V-ATPase E subunit family. As to quaternary structure, has multiple subunits with at least A(3), B(3), C, D, E, F, H, I and proteolipid K(x).

It is found in the cell membrane. Functionally, component of the A-type ATP synthase that produces ATP from ADP in the presence of a proton gradient across the membrane. This chain is A-type ATP synthase subunit E, found in Aeropyrum pernix (strain ATCC 700893 / DSM 11879 / JCM 9820 / NBRC 100138 / K1).